Reading from the N-terminus, the 238-residue chain is Ribosomal RNA small subunit methyltransferase G (238 aa).

S-adenosyl-L-methionine is bound by residues G77, F82, 128–129 (AE), and R147.

It belongs to the methyltransferase superfamily. RNA methyltransferase RsmG family.

It localises to the cytoplasm. Functionally, specifically methylates the N7 position of guanine in position 535 of 16S rRNA. This chain is Ribosomal RNA small subunit methyltransferase G, found in Brevibacillus brevis (strain 47 / JCM 6285 / NBRC 100599).